Here is a 131-residue protein sequence, read N- to C-terminus: Fimbrial assembly protein, serogroups C1 and C2 (131 aa).

The polypeptide is Fimbrial assembly protein, serogroups C1 and C2 (fimB) (Dichelobacter nodosus (Bacteroides nodosus)).